An 85-amino-acid chain; its full sequence is MNLLDFFRERKKKETPAAIAKERLQIIVAHERGQRSEPDYLPALQKELVEVIRKYVNIDSDQVHVALEDQGSCSILELNITLPDR.

The protein belongs to the MinE family.

Its function is as follows. Prevents the cell division inhibition by proteins MinC and MinD at internal division sites while permitting inhibition at polar sites. This ensures cell division at the proper site by restricting the formation of a division septum at the midpoint of the long axis of the cell. This is Cell division topological specificity factor from Stutzerimonas stutzeri (strain A1501) (Pseudomonas stutzeri).